The sequence spans 156 residues: Putative HTH-type transcriptional regulator BadM (156 aa).

One can recognise an HTH rrf2-type domain in the interval 4–130 (RLQKSTMCGL…RSVSITSLLK (127 aa)). Residues 136-156 (RRKTERGPNGASARHSSAGRA) are disordered. Positions 145–156 (GASARHSSAGRA) are enriched in low complexity.

This Rhodopseudomonas palustris (strain ATCC BAA-98 / CGA009) protein is Putative HTH-type transcriptional regulator BadM (badM).